Here is a 368-residue protein sequence, read N- to C-terminus: Glutamate 5-kinase (368 aa).

Lys-18 serves as a coordination point for ATP. Substrate-binding residues include Ser-58, Asp-145, and Asn-157. ATP contacts are provided by residues 177-178 (SD) and 218-224 (TGGMASK). The PUA domain maps to 280-358 (AGSLTLDEGA…SELPGELRRP (79 aa)).

It belongs to the glutamate 5-kinase family.

It localises to the cytoplasm. The enzyme catalyses L-glutamate + ATP = L-glutamyl 5-phosphate + ADP. The protein operates within amino-acid biosynthesis; L-proline biosynthesis; L-glutamate 5-semialdehyde from L-glutamate: step 1/2. Functionally, catalyzes the transfer of a phosphate group to glutamate to form L-glutamate 5-phosphate. In Mycobacterium ulcerans (strain Agy99), this protein is Glutamate 5-kinase.